Reading from the N-terminus, the 195-residue chain is uncharacterized protein (195 aa).

The region spanning 34–165 (SHHAAVLIPI…WLDIHRGGVN (132 aa)) is the Nudix hydrolase domain. The Nudix box motif lies at 72-94 (GKADPQDSSLIETALREAEEEVA). Residues glutamate 88 and glutamate 92 each contribute to the Mg(2+) site.

It belongs to the Nudix hydrolase family. PCD1 subfamily. Requires Mn(2+) as cofactor. Mg(2+) is required as a cofactor.

Functionally, probably mediates the hydrolysis of some nucleoside diphosphate derivatives. This is an uncharacterized protein from Yersinia enterocolitica serotype O:8 / biotype 1B (strain NCTC 13174 / 8081).